A 325-amino-acid chain; its full sequence is NADH-quinone oxidoreductase subunit H (325 aa).

A run of 8 helical transmembrane segments spans residues 11 to 31 (ILLTILKAVVILLVVVTCGAF), 81 to 101 (VIFTLAPMIAFTSLLLAFAIV), 114 to 134 (IGILFFLMMAGLAVYAVLFAG), 154 to 174 (LSYEVFLGLSLMGVVAQAGSF), 186 to 206 (VWNVIPQFFGFITFAIAGVAV), 237 to 257 (FFVGEYIGIVTISALMVTLFF), 265 to 285 (LPPFIWFALKTAFFMMMFILI), and 304 to 324 (ICLPLTLINLLVTAAVILWQA).

Belongs to the complex I subunit 1 family. As to quaternary structure, NDH-1 is composed of 13 different subunits. Subunits NuoA, H, J, K, L, M, N constitute the membrane sector of the complex.

The protein localises to the cell inner membrane. The enzyme catalyses a quinone + NADH + 5 H(+)(in) = a quinol + NAD(+) + 4 H(+)(out). NDH-1 shuttles electrons from NADH, via FMN and iron-sulfur (Fe-S) centers, to quinones in the respiratory chain. The immediate electron acceptor for the enzyme in this species is believed to be ubiquinone. Couples the redox reaction to proton translocation (for every two electrons transferred, four hydrogen ions are translocated across the cytoplasmic membrane), and thus conserves the redox energy in a proton gradient. This subunit may bind ubiquinone. In Shigella flexneri serotype 5b (strain 8401), this protein is NADH-quinone oxidoreductase subunit H.